Consider the following 632-residue polypeptide: Extracellular metalloproteinase 5 (632 aa).

A signal peptide spans 1 to 20; that stretch reads MHGLLLAAGLLSLPLHVLAH. A propeptide spanning residues 21–244 is cleaved from the precursor; the sequence is PQPGTSLAGR…HNVVDYVSHA (224 aa). A glycan (N-linked (GlcNAc...) asparagine) is linked at Asn284. His427 lines the Zn(2+) pocket. Glu428 is a catalytic residue. His431 contacts Zn(2+). Residues Asn591 and Asn620 are each glycosylated (N-linked (GlcNAc...) asparagine).

This sequence belongs to the peptidase M36 family. It depends on Zn(2+) as a cofactor.

The protein localises to the secreted. In terms of biological role, secreted metalloproteinase probably acting as a virulence factor. The chain is Extracellular metalloproteinase 5 (MEP5) from Arthroderma otae (strain ATCC MYA-4605 / CBS 113480) (Microsporum canis).